The following is a 97-amino-acid chain: Citrate lyase acyl carrier protein (97 aa).

An O-(phosphoribosyl dephospho-coenzyme A)serine modification is found at serine 14.

The protein belongs to the CitD family. Oligomer with a subunit composition of (alpha,beta,gamma)6.

The protein localises to the cytoplasm. Covalent carrier of the coenzyme of citrate lyase. This Cronobacter sakazakii (strain ATCC BAA-894) (Enterobacter sakazakii) protein is Citrate lyase acyl carrier protein.